We begin with the raw amino-acid sequence, 531 residues long: UDP-glucuronosyltransferase 2B13 (531 aa).

Residues 1–24 (MPVKCISVLLLLLQLSCCFSSGSC) form the signal peptide. N69, N101, and N317 each carry an N-linked (GlcNAc...) asparagine glycan. The chain crosses the membrane as a helical span at residues 495–511 (VIGFLLACVAITTYLIV).

Belongs to the UDP-glycosyltransferase family.

It localises to the microsome membrane. The protein resides in the endoplasmic reticulum membrane. It catalyses the reaction glucuronate acceptor + UDP-alpha-D-glucuronate = acceptor beta-D-glucuronoside + UDP + H(+). Its function is as follows. UDPGT is of major importance in the conjugation and subsequent elimination of potentially toxic xenobiotics and endogenous compounds. Acts on small phenolic agents such as 2-beta-naphthol and 4-methylumbelliferone as well as bulky phenolic compounds like 2-hydroxy- and 4-hydroxybiphenyl. In contrast to 2B16 it is active toward octylgallate. This is UDP-glucuronosyltransferase 2B13 (UGT2B13) from Oryctolagus cuniculus (Rabbit).